The sequence spans 375 residues: F-box/kelch-repeat protein At4g39240 (375 aa).

Low complexity predominate over residues 1 to 15 (MPFSAASSSSVSSIA). Residues 1–27 (MPFSAASSSSVSSIAEEPPPKKQHDPS) form a disordered region. Residues 31–77 (SSYLLLLPDEIILNCLARLPKCYYPVISLVSKTFRRLIASPEIYVER) enclose the F-box domain. Kelch repeat units follow at residues 140–186 (EIYV…FFDG), 187–232 (KLYV…RSFA), and 275–321 (KIYT…GNLA).

The chain is F-box/kelch-repeat protein At4g39240 from Arabidopsis thaliana (Mouse-ear cress).